We begin with the raw amino-acid sequence, 868 residues long: MKDSWNSTSIIPFTFSSLIFFLFTFDFQDVFGVPTKHLCRLEQRDALLELKKEFKIKKPCFDGLHPTTESWANNSDCCYWDGITCNDKSGEVLELDLSRSCLQSRFHSNSSLFTVLNLRFLTTLDLSYNYFSGQIPSCIENFSHLTTLDLSKNYFSGGIPSSIGNLSQLTFLDLSGNEFVGEMPFFGNMNQLTNLYVDSNDLTGIFPLSLLNLKHLSDLSLSRNQFTGTLPSNMSSLSNLEYFEAWGNAFTGTLPSSLFTIASLTSINLRNNQLNGTLEFGNISSPSTLTVLDISNNNFIGPIPKSISKFINLQDLDLSHLNTQGPVDFSIFTNLKSLQLLNLSHLNTTTTIDLNALFSSHLNSIYSMDLSGNHVSATTKISVADHHPTQLISQLYLSGCGITEFPELLRSQHKMTNLDISNNKIKGQVPGWLWTLPKLIFVDLSNNIFTGFERSTEHGLSLITKPSMQYLVGSNNNFTGKIPSFICALRSLITLDLSDNNLNGSIPPCMGNLKSTLSFLNLRQNRLGGGLPRSIFKSLRSLDVGHNQLVGKLPRSFIRLSALEVLNVENNRINDTFPFWLSSLKKLQVLVLRSNAFHGPIHHASFHTLRIINLSHNQFSGTLPANYFVNWNAMSSLMATEDRSQEKYMGDSFRYYHDSVVLMNKGLEMELVRILKIYTALDFSENKLEGEIPRSIGLLKELHVLNLSSNAFTGHIPSSMGNLRELESLDVSQNKLSGEIPQELGNLSYLAYMNFSHNQLGGLVPGGTQFRRQNCSSFKDNPGLYGSSLEEVCLDIHAPAPQQHEPPELEEEDREVFSWIAAAIGFGPGIAFGLTIRYILVFYKPDWFMHTFGHLQPSAHEKRLRRKQ.

Residues 1–32 form the signal peptide; the sequence is MKDSWNSTSIIPFTFSSLIFFLFTFDFQDVFG. The Extracellular segment spans residues 33–815; the sequence is VPTKHLCRLE…PPELEEEDRE (783 aa). Residues Asn-73, Asn-109, Asn-141, and Asn-165 are each glycosylated (N-linked (GlcNAc...) asparagine). LRR repeat units lie at residues 118–142, 143–166, 168–188, 189–213, 214–237, 239–261, 262–285, 287–310, 312–334, 335–360, 362–385, 389–412, 413–436, 438–459, 465–489, 490–515, 517–538, 540–560, 561–586, 588–606, 607–630, 675–699, 700–723, 724–747, and 749–772; these read LRFL…IENF, SHLT…IGNL, QLTF…FFGN, MNQL…LLNL, KHLS…MSSL, NLEY…LFTI, ASLT…NISS, STLT…ISKF, NLQD…IFTN, LKSL…LFSS, LNSI…SVAD, TQLI…LRSQ, HKMT…LWTL, KLIF…TEHG, KPSM…ICAL, RSLI…NLKS, LSFL…IFKS, RSLD…FIRL, SALE…SLKK, QVLV…HASF, HTLR…YFVN, LKIY…IGLL, KELH…MGNL, RELE…LGNL, and YLAY…QFRR. N-linked (GlcNAc...) asparagine glycosylation occurs at Asn-233. N-linked (GlcNAc...) asparagine glycosylation is found at Asn-275 and Asn-282. 2 N-linked (GlcNAc...) asparagine glycosylation sites follow: Asn-342 and Asn-347. N-linked (GlcNAc...) asparagine glycans are attached at residues Asn-477 and Asn-503. Asn-574 carries an N-linked (GlcNAc...) asparagine glycan. A glycan (N-linked (GlcNAc...) asparagine) is linked at Asn-613. N-linked (GlcNAc...) asparagine glycans are attached at residues Asn-706, Asn-746, Asn-754, and Asn-774. A helical membrane pass occupies residues 816 to 836; that stretch reads VFSWIAAAIGFGPGIAFGLTI. The Cytoplasmic segment spans residues 837–868; the sequence is RYILVFYKPDWFMHTFGHLQPSAHEKRLRRKQ.

Belongs to the RLP family.

It localises to the cell membrane. The protein is Receptor-like protein 32 of Arabidopsis thaliana (Mouse-ear cress).